Reading from the N-terminus, the 633-residue chain is tRNA uridine 5-carboxymethylaminomethyl modification enzyme MnmG (633 aa).

13–18 (GGGHAG) is a binding site for FAD. Residue 273 to 287 (GPRYCPSIEDKINRF) participates in NAD(+) binding.

This sequence belongs to the MnmG family. In terms of assembly, homodimer. Heterotetramer of two MnmE and two MnmG subunits. Requires FAD as cofactor.

Its subcellular location is the cytoplasm. NAD-binding protein involved in the addition of a carboxymethylaminomethyl (cmnm) group at the wobble position (U34) of certain tRNAs, forming tRNA-cmnm(5)s(2)U34. This is tRNA uridine 5-carboxymethylaminomethyl modification enzyme MnmG from Pseudoalteromonas atlantica (strain T6c / ATCC BAA-1087).